Here is a 24-residue protein sequence, read N- to C-terminus: Osteocalcin (24 aa).

A Gla domain is found at 1–24 (REVCELNPDCDELADHIGFQEAYR). Glu2, Glu5, and Asp11 together coordinate Ca(2+). 4-carboxyglutamate is present on residues Glu2 and Glu5. A disulfide bond links Cys4 and Cys10.

The protein belongs to the osteocalcin/matrix Gla protein family. Gamma-carboxyglutamate residues are formed by vitamin K dependent carboxylation by GGCX. These residues are essential for the binding of calcium. Decarboxylation promotes the hormone activity.

The protein resides in the secreted. The carboxylated form is one of the main organic components of the bone matrix, which constitutes 1-2% of the total bone protein: it acts as a negative regulator of bone formation and is required to limit bone formation without impairing bone resorption or mineralization. The carboxylated form binds strongly to apatite and calcium. In terms of biological role, the uncarboxylated form acts as a hormone secreted by osteoblasts, which regulates different cellular processes, such as energy metabolism, male fertility and brain development. Regulates of energy metabolism by acting as a hormone favoring pancreatic beta-cell proliferation, insulin secretion and sensitivity and energy expenditure. Uncarboxylated osteocalcin hormone also promotes testosterone production in the testes: acts as a ligand for G protein-coupled receptor GPRC6A at the surface of Leydig cells, initiating a signaling response that promotes the expression of enzymes required for testosterone synthesis in a CREB-dependent manner. Also acts as a regulator of brain development: osteocalcin hormone crosses the blood-brain barrier and acts as a ligand for GPR158 on neurons, initiating a signaling response that prevents neuronal apoptosis in the hippocampus, favors the synthesis of all monoamine neurotransmitters and inhibits that of gamma-aminobutyric acid (GABA). Osteocalcin also crosses the placenta during pregnancy and maternal osteocalcin is required for fetal brain development. This Homo sapiens neanderthalensis (Neanderthal) protein is Osteocalcin.